Reading from the N-terminus, the 590-residue chain is Multidrug resistance ABC transporter ATP-binding and permease protein (590 aa).

The next 6 helical transmembrane spans lie at 35-55 (YLFF…QLQV), 79-99 (IALY…LGIF), 150-170 (IPQA…MLQM), 176-196 (LAMI…MTFG), 261-281 (VMML…IYLI), and 292-312 (LGMM…ATFF). Residues 38-317 (FIIGILAGIV…VATFFTELAK (280 aa)) form the ABC transmembrane type-1 domain. Positions 349–584 (LSARHVDFAY…HPLYAKYVSE (236 aa)) constitute an ABC transporter domain. 382-389 (GPSGGGKS) lines the ATP pocket.

It belongs to the ABC transporter superfamily. Multidrug exporter LmrA (TC 3.A.1.117.1) family. As to quaternary structure, homodimer.

It is found in the cell membrane. The catalysed reaction is ATP + H2O + xenobioticSide 1 = ADP + phosphate + xenobioticSide 2.. Its function is as follows. Efflux transporter for a variety of amphiphilic cationic compounds, including antibiotics. This is Multidrug resistance ABC transporter ATP-binding and permease protein (lmrA) from Lactococcus lactis subsp. lactis (strain IL1403) (Streptococcus lactis).